The primary structure comprises 274 residues: Protein RecA (274 aa).

43–50 provides a ligand contact to ATP; sequence GPESSGKT.

This sequence belongs to the RecA family.

It is found in the cytoplasm. Functionally, can catalyze the hydrolysis of ATP in the presence of single-stranded DNA, the ATP-dependent uptake of single-stranded DNA by duplex DNA, and the ATP-dependent hybridization of homologous single-stranded DNAs. It interacts with LexA causing its activation and leading to its autocatalytic cleavage. The chain is Protein RecA from Neisseria flavescens.